The primary structure comprises 261 residues: MPKLEEIDDLEDIDNLHMDLAELDASLKTPIAPRLKPTVVRSQDSEPPLFPQIPLEGEQGPSFTFIDPKSGRVEETTKITKEDLADLKRFQILYPCYFDKNRTHAQGRQVPLELAVANPLAKTIADACRELEVLCVFEGEKTHPQDFGNPGRVRVLLKENGKAAGKYANKRWLMKNVAKYLQEHPTTLESLREIPYGPDFEGIEPSKIPLVHGFQMNEIVPLHSPFTMGHPMTKGIYTAPKVVAPEKQIKAPKNKYKVVRR.

The protein belongs to the SRP19 family. As to quaternary structure, fungal signal recognition particle consists of a 7S RNA molecule (scR1) and at least six protein subunits: SRP72, SRP68, SRP54, SEC65, SRP21 and SRP14.

The protein resides in the cytoplasm. In terms of biological role, signal-recognition-particle assembly has a crucial role in targeting secretory proteins to the rough endoplasmic reticulum membrane. It must be involved intimately in the translocation of a wide variety of protein substrates. This Eremothecium gossypii (strain ATCC 10895 / CBS 109.51 / FGSC 9923 / NRRL Y-1056) (Yeast) protein is Signal recognition particle SEC65 subunit (SEC65).